Reading from the N-terminus, the 60-residue chain is UPF0434 protein NMA0874 (60 aa).

This sequence belongs to the UPF0434 family.

The protein is UPF0434 protein NMA0874 of Neisseria meningitidis serogroup A / serotype 4A (strain DSM 15465 / Z2491).